A 915-amino-acid chain; its full sequence is Clathrin coat assembly protein AP180 (915 aa).

The 132-residue stretch at Gln14–Phe145 folds into the ENTH domain. Disordered stretches follow at residues Leu285 to Pro326, Ser391 to Ala425, and Pro497 to Ala522. 3 positions are modified to phosphoserine: Ser296, Ser300, and Ser306. Residues Leu302–Thr324 show a composition bias toward polar residues. An O-linked (GlcNAc) threonine glycan is attached at Thr310. Ser313 is modified (phosphoserine). Thr317 carries the phosphothreonine modification. Low complexity-rich tracts occupy residues Thr410–Ala425 and Ser500–Ala511. Positions Pro512 to Ala522 are enriched in pro residues. A phosphoserine mark is found at Ser594, Ser600, Pro627, Ser640, and Ser646. Residues Thr720–Asp735 are compositionally biased toward low complexity. Positions Thr720–Leu765 are disordered. Ser775 is subject to Phosphoserine. The disordered stretch occupies residues Ser817–Thr855. The residue at position 873 (Arg873) is an Asymmetric dimethylarginine; alternate. Position 873 is an omega-N-methylarginine; alternate (Arg873). Residues Pro875–Leu915 form a disordered region. Positions Thr884–Ser896 are enriched in polar residues. Basic and acidic residues predominate over residues Pro901–Leu915.

It belongs to the PICALM/SNAP91 family. Binds AP2A2. Interacts with AP2B1; clathrin competes with SNAP91. Thr-310 can be modified by the addition of N-acetylglucosamine which can be further phosphorylated. The form with phosphorylated O-linked N-acetylglucosamine is predominant in brain synaptosomes. There is no evidence for direct Thr-310 phosphorylation.

The protein localises to the cell membrane. Its subcellular location is the membrane. The protein resides in the coated pit. Its function is as follows. Adaptins are components of the adapter complexes which link clathrin to receptors in coated vesicles. Clathrin-associated protein complexes are believed to interact with the cytoplasmic tails of membrane proteins, leading to their selection and concentration. Binding of AP180 to clathrin triskelia induces their assembly into 60-70 nm coats. This is Clathrin coat assembly protein AP180 (Snap91) from Rattus norvegicus (Rat).